Consider the following 224-residue polypeptide: Urease accessory protein UreF (224 aa).

Belongs to the UreF family. UreD, UreF and UreG form a complex that acts as a GTP-hydrolysis-dependent molecular chaperone, activating the urease apoprotein by helping to assemble the nickel containing metallocenter of UreC. The UreE protein probably delivers the nickel.

It is found in the cytoplasm. Required for maturation of urease via the functional incorporation of the urease nickel metallocenter. The protein is Urease accessory protein UreF of Klebsiella pneumoniae subsp. pneumoniae (strain ATCC 700721 / MGH 78578).